Consider the following 130-residue polypeptide: Small ribosomal subunit protein uS11 (130 aa).

This sequence belongs to the universal ribosomal protein uS11 family. Part of the 30S ribosomal subunit. Interacts with proteins S7 and S18. Binds to IF-3.

In terms of biological role, located on the platform of the 30S subunit, it bridges several disparate RNA helices of the 16S rRNA. Forms part of the Shine-Dalgarno cleft in the 70S ribosome. This Acholeplasma laidlawii (strain PG-8A) protein is Small ribosomal subunit protein uS11.